The following is a 694-amino-acid chain: Nuclear cap-binding protein subunit 3 (694 aa).

Positions 1 to 47 (MAAVRSLRVSVKSDSASDRSESDSESDSDRDAREAEPMEVEEGEVEL) are disordered. Residues 15–36 (SASDRSESDSESDSDRDAREAE) show a composition bias toward basic and acidic residues. Residues 37-47 (PMEVEEGEVEL) are compositionally biased toward acidic residues. The segment at 126-187 (EALHMSGVDD…LSRMPDKEEV (62 aa)) is RNA recognition motif (RRM) domain. Residues 155 to 158 (WIDD) carry the WLDD motif; essential for 7-methylguanosine-containing mRNA cap binding motif. Disordered stretches follow at residues 183 to 277 (DKEE…VKPF), 336 to 430 (ILKT…MDYD), and 461 to 694 (LRNS…DSDS). Polar residues predominate over residues 189–203 (NTDSSKPSELPVQTQ). A compositionally biased stretch (acidic residues) spans 212-235 (DDDDDDDEEEEGEVDDDDDDDEED). The segment covering 236–264 (EKARDIEDETEKKPQETRETSLSQAERDS) has biased composition (basic and acidic residues). Over residues 368–386 (EPIEEEEEEEEDGEEDMDA) the composition is skewed to acidic residues. Over residues 387-404 (DDRVVEYKDRGEKERGPR) the composition is skewed to basic and acidic residues. The span at 477–496 (IGGGGGGGSGGAVEGRGEGG) shows a compositional bias: gly residues. 3 stretches are compositionally biased toward basic and acidic residues: residues 501 to 517 (TSEK…EKRQ), 563 to 595 (SRRE…DKKT), and 605 to 618 (SHKD…DKPS). The segment covering 634–646 (DSDGVEDEDEEDD) has biased composition (acidic residues). Over residues 685 to 694 (DGSNGSDSDS) the composition is skewed to low complexity.

It belongs to the NCBP3 family. Component of an alternative cap-binding complex (CBC) composed of NCBP1/CBP80 and NCBP3.

It localises to the nucleus. It is found in the cytoplasm. Functionally, associates with NCBP1/CBP80 to form an alternative cap-binding complex (CBC) which plays a key role in mRNA export. NCBP3 serves as adapter protein linking the capped RNAs (m7GpppG-capped RNA) to NCBP1/CBP80. Unlike the conventional CBC with NCBP2 which binds both small nuclear RNA (snRNA) and messenger (mRNA) and is involved in their export from the nucleus, the alternative CBC with NCBP3 does not bind snRNA and associates only with mRNA thereby playing a role in only mRNA export. The protein is Nuclear cap-binding protein subunit 3 of Danio rerio (Zebrafish).